The sequence spans 500 residues: MDAALALLFGQVATAVLPYVVNSIGRVPRPKRVDVKKAMGEAHQCRPVVPYRAPRPYTEGRVKALFIGINYTGSSAQLGGCVNDVMHMLQTLQRIEFPISECCILVDDRRFPNFTAMPTRENIIKYMAWLVYDVRPGDVLFFHFSGHGAETKGGRDSNEKMDQCLVPLDYDKAGAILDDDLFELMIKGLPAGVRMTAVFDCCHSASLLDLPFAFVAGRNVSSNQRHEMRMVRKDNYSRGDVVMFSGCEDSGTSADVTNTSSFGNGTVAAGGAATQAFTWALLNTTGYSYIDIFMKTREVLRQKGYKQVPQLSSSKPVDLYKQFSLFGPLTMNASLVQHLPQEYVQPWAPHPAYQQPHEATLPASVSQPHSQPVMGIPVASTSNGKSNPGVSDGGRASGEVYPPTQYPSSHPAPQQQAYYQPPQQAYYQPPQQAYYQPPQQAYYQPPQQAYYQPPQQAYYQPEPHHQPAPPPPPKKENKPARPGYPMSYCMKFSQGKPGRK.

The N-terminal stretch at 1–18 (MDAALALLFGQVATAVLP) is a signal peptide. Residues 19-63 (YVVNSIGRVPRPKRVDVKKAMGEAHQCRPVVPYRAPRPYTEGRVK) form an important for catalytic activity region. N-linked (GlcNAc...) asparagine glycosylation is found at asparagine 70 and asparagine 113. Residue histidine 147 is part of the active site. 3 residues coordinate Ca(2+): aspartate 162, aspartate 178, and aspartate 179. Cysteine 202 is an active-site residue. Position 209 (aspartate 209) interacts with Ca(2+). N-linked (GlcNAc...) asparagine glycosylation is found at asparagine 219, asparagine 235, asparagine 258, asparagine 264, asparagine 283, and asparagine 332. Disordered regions lie at residues 358–419 (EATL…QAYY) and 444–500 (QPPQ…PGRK). Positions 379 to 389 (ASTSNGKSNPG) are enriched in polar residues. Over residues 444–461 (QPPQQAYYQPPQQAYYQP) the composition is skewed to low complexity.

The protein belongs to the peptidase C14B family.

Its subcellular location is the recycling endosome. Cysteine protease that cleaves specifically after arginine or lysine residues. In Trypanosoma brucei brucei, this protein is Metacaspase-5.